The sequence spans 475 residues: Ribulose bisphosphate carboxylase large chain (475 aa).

The propeptide occupies 1-2 (MS). The residue at position 3 (Pro-3) is an N-acetylproline. Position 14 is an N6,N6,N6-trimethyllysine (Lys-14). Residues Asn-123 and Thr-173 each contribute to the substrate site. Lys-175 (proton acceptor) is an active-site residue. Residue Lys-177 coordinates substrate. Mg(2+)-binding residues include Lys-201, Asp-203, and Glu-204. Lys-201 is modified (N6-carboxylysine). His-294 acts as the Proton acceptor in catalysis. 3 residues coordinate substrate: Arg-295, His-327, and Ser-379.

This sequence belongs to the RuBisCO large chain family. Type I subfamily. As to quaternary structure, heterohexadecamer of 8 large chains and 8 small chains; disulfide-linked. The disulfide link is formed within the large subunit homodimers. Mg(2+) serves as cofactor. The disulfide bond which can form in the large chain dimeric partners within the hexadecamer appears to be associated with oxidative stress and protein turnover.

It localises to the plastid. The protein resides in the chloroplast. The enzyme catalyses 2 (2R)-3-phosphoglycerate + 2 H(+) = D-ribulose 1,5-bisphosphate + CO2 + H2O. It catalyses the reaction D-ribulose 1,5-bisphosphate + O2 = 2-phosphoglycolate + (2R)-3-phosphoglycerate + 2 H(+). In terms of biological role, ruBisCO catalyzes two reactions: the carboxylation of D-ribulose 1,5-bisphosphate, the primary event in carbon dioxide fixation, as well as the oxidative fragmentation of the pentose substrate in the photorespiration process. Both reactions occur simultaneously and in competition at the same active site. This Populus tremuloides (Quaking aspen) protein is Ribulose bisphosphate carboxylase large chain.